The primary structure comprises 1254 residues: DNA-directed RNA polymerase subunit beta' (1254 aa).

Zn(2+) contacts are provided by Cys-59, Cys-61, Cys-76, and Cys-79. The Mg(2+) site is built by Asp-501, Asp-503, and Asp-505. The Zn(2+) site is built by Cys-871, Cys-946, Cys-953, and Cys-956.

It belongs to the RNA polymerase beta' chain family. As to quaternary structure, the RNAP catalytic core consists of 2 alpha, 1 beta, 1 beta' and 1 omega subunit. When a sigma factor is associated with the core the holoenzyme is formed, which can initiate transcription. Mg(2+) serves as cofactor. Requires Zn(2+) as cofactor.

The enzyme catalyses RNA(n) + a ribonucleoside 5'-triphosphate = RNA(n+1) + diphosphate. Its function is as follows. DNA-dependent RNA polymerase catalyzes the transcription of DNA into RNA using the four ribonucleoside triphosphates as substrates. The polypeptide is DNA-directed RNA polymerase subunit beta' (Mesoplasma florum (strain ATCC 33453 / NBRC 100688 / NCTC 11704 / L1) (Acholeplasma florum)).